A 188-amino-acid chain; its full sequence is Type II secretion system protein H (188 aa).

The propeptide at 1-10 (MKRSTRKQQG) is leader sequence. An N-methylphenylalanine modification is found at Phe11. The helical transmembrane segment at 13-35 (LLEMMLVVLLAGIAAGMVVMAFP) threads the bilayer.

The protein belongs to the GSP H family. As to quaternary structure, type II secretion is composed of four main components: the outer membrane complex, the inner membrane complex, the cytoplasmic secretion ATPase and the periplasm-spanning pseudopilus. Interacts with core component OutG. Cleaved by prepilin peptidase. Post-translationally, methylated by prepilin peptidase at the amino group of the N-terminal phenylalanine once the leader sequence is cleaved by prepilin peptidase.

Its subcellular location is the cell inner membrane. In terms of biological role, component of the type II secretion system required for the energy-dependent secretion of extracellular factors such as proteases and toxins from the periplasm. Part of the pseudopilus tip complex that is critical for the recognition and binding of secretion substrates. This is Type II secretion system protein H (outH) from Pectobacterium carotovorum subsp. carotovorum (Erwinia carotovora subsp. carotovora).